A 378-amino-acid polypeptide reads, in one-letter code: Probable pectin lyase A (378 aa).

A signal peptide spans 1–18 (MKYQDLLAIAGCIANAGA). Intrachain disulfides connect Cys-81–Cys-100 and Cys-90–Cys-224. Asn-127 carries an N-linked (GlcNAc...) asparagine glycan. Arg-254 is an active-site residue. The cysteines at positions 321 and 329 are disulfide-linked.

The protein belongs to the polysaccharide lyase 1 family.

It localises to the secreted. It carries out the reaction Eliminative cleavage of (1-&gt;4)-alpha-D-galacturonan methyl ester to give oligosaccharides with 4-deoxy-6-O-methyl-alpha-D-galact-4-enuronosyl groups at their non-reducing ends.. In terms of biological role, pectinolytic enzymes consist of four classes of enzymes: pectin lyase, polygalacturonase, pectin methylesterase and rhamnogalacturonase. Among pectinolytic enzymes, pectin lyase is the most important in depolymerization of pectin, since it cleaves internal glycosidic bonds of highly methylated pectins. The sequence is that of Probable pectin lyase A (pelA) from Aspergillus fumigatus (strain CBS 144.89 / FGSC A1163 / CEA10) (Neosartorya fumigata).